The sequence spans 431 residues: Tyrosine--tRNA ligase (431 aa).

L-tyrosine is bound at residue Tyr33. The short motif at 38–47 is the 'HIGH' region element; that stretch reads PTADSLHIGS. L-tyrosine is bound by residues Tyr172 and Gln176. The 'KMSKS' region signature appears at 234-238; it reads KFGKS. Lys237 is a binding site for ATP. Residues 364–431 enclose the S4 RNA-binding domain; the sequence is INIVEVLNEK…KKNYFVLNVK (68 aa).

The protein belongs to the class-I aminoacyl-tRNA synthetase family. TyrS type 1 subfamily. In terms of assembly, homodimer.

The protein resides in the cytoplasm. The catalysed reaction is tRNA(Tyr) + L-tyrosine + ATP = L-tyrosyl-tRNA(Tyr) + AMP + diphosphate + H(+). In terms of biological role, catalyzes the attachment of tyrosine to tRNA(Tyr) in a two-step reaction: tyrosine is first activated by ATP to form Tyr-AMP and then transferred to the acceptor end of tRNA(Tyr). The sequence is that of Tyrosine--tRNA ligase from Flavobacterium psychrophilum (strain ATCC 49511 / DSM 21280 / CIP 103535 / JIP02/86).